We begin with the raw amino-acid sequence, 305 residues long: GMP synthase [glutamine-hydrolyzing] subunit B (305 aa).

The GMPS ATP-PPase domain maps to 2–184 (VKPEKFIPKA…LQLPEEICER (183 aa)). Position 29–35 (29–35 (SGGVDSS)) interacts with ATP.

In terms of assembly, heterodimer composed of a glutamine amidotransferase subunit (A) and a GMP-binding subunit (B).

It carries out the reaction XMP + L-glutamine + ATP + H2O = GMP + L-glutamate + AMP + diphosphate + 2 H(+). The protein operates within purine metabolism; GMP biosynthesis; GMP from XMP (L-Gln route): step 1/1. Catalyzes the synthesis of GMP from XMP. The sequence is that of GMP synthase [glutamine-hydrolyzing] subunit B (guaAB) from Methanosarcina acetivorans (strain ATCC 35395 / DSM 2834 / JCM 12185 / C2A).